Here is a 121-residue protein sequence, read N- to C-terminus: Large ribosomal subunit protein uL22c (121 aa).

This sequence belongs to the universal ribosomal protein uL22 family. As to quaternary structure, part of the 50S ribosomal subunit.

The protein localises to the plastid. It is found in the chloroplast. In terms of biological role, this protein binds specifically to 23S rRNA. The globular domain of the protein is located near the polypeptide exit tunnel on the outside of the subunit, while an extended beta-hairpin is found that lines the wall of the exit tunnel in the center of the 70S ribosome. This chain is Large ribosomal subunit protein uL22c (rpl22), found in Welwitschia mirabilis (Tree tumbo).